Consider the following 561-residue polypeptide: Urocanate hydratase (561 aa).

NAD(+)-binding positions include 52–53 (GG), Gln130, 176–178 (GMG), Glu196, Arg201, 242–243 (NA), 267–271 (QTSAH), 277–278 (YL), and Tyr326. Cys414 is a catalytic residue. Gly496 provides a ligand contact to NAD(+).

The protein belongs to the urocanase family. Requires NAD(+) as cofactor.

The protein localises to the cytoplasm. The catalysed reaction is 4-imidazolone-5-propanoate = trans-urocanate + H2O. The protein operates within amino-acid degradation; L-histidine degradation into L-glutamate; N-formimidoyl-L-glutamate from L-histidine: step 2/3. Functionally, catalyzes the conversion of urocanate to 4-imidazolone-5-propionate. The polypeptide is Urocanate hydratase (Rhizobium rhizogenes (strain K84 / ATCC BAA-868) (Agrobacterium radiobacter)).